Here is a 410-residue protein sequence, read N- to C-terminus: Homeobox protein Hox-A3a (410 aa).

The interval 79–126 is disordered; the sequence is VTDTSDNKQPPTAPSGPSSPSSLNQIPNIDSAAKNPVHVSPTPSTRKH. An Antp-type hexapeptide motif is present at residues 127–132; sequence IFPWMK. Positions 163-222 form a DNA-binding region, homeobox; that stretch reads SKRARTAYTSAQLVELEKEFHFNRYLCRPRRVEMANLLNLTERQIKIWFQNRRMKYKKDQ. The interval 222–249 is disordered; that stretch reads QKGLGMMPSPGAQSPHSPVSLSSGGGGG.

The protein belongs to the Antp homeobox family.

It is found in the nucleus. Its function is as follows. Sequence-specific transcription factor which is part of a developmental regulatory system that provides cells with specific positional identities on the anterior-posterior axis. This Danio rerio (Zebrafish) protein is Homeobox protein Hox-A3a (hoxa3a).